The primary structure comprises 140 residues: UPF0225 protein SAV_6631 (140 aa).

Positions 1-22 (MSKSRRTRSTSRPTSRPQPASC) are disordered. Residues 10 to 19 (TSRPTSRPQP) show a composition bias toward low complexity.

It belongs to the UPF0225 family.

The protein is UPF0225 protein SAV_6631 of Streptomyces avermitilis (strain ATCC 31267 / DSM 46492 / JCM 5070 / NBRC 14893 / NCIMB 12804 / NRRL 8165 / MA-4680).